Reading from the N-terminus, the 179-residue chain is Small capsomere-interacting protein (179 aa).

Residues 107–179 (IPLPPETGEF…QAPGTKGKKQ (73 aa)) are disordered. Residues 118–171 (TGGTSSSVRSASGASGGAASTAASGGSASAAASGASGGSASQSDVSSRSRSQQA) show a composition bias toward low complexity.

It belongs to the herpesviridae small capsomere-interacting protein family. In terms of assembly, interacts with the major capsid protein/MCP.

The protein localises to the virion. Its subcellular location is the host nucleus. In terms of biological role, participates in the assembly of the infectious particles by decorating the outer surface of the capsid shell and thus forming a layer between the capsid and the tegument. Complexes composed of the major capsid protein and small capsomere-interacting protein/SCP assemble together in the host cytoplasm and are translocated to the nucleus, where they accumulate and participate in capsid assembly. The sequence is that of Small capsomere-interacting protein from Equine herpesvirus 2 (strain 86/87) (EHV-2).